The following is a 368-amino-acid chain: Seven-bladed beta-propeller protein MSMEG_5308 (368 aa).

Interacts with MmpL3 and TtfA.

It is found in the cell septum. The protein resides in the cell tip. Stabilizes the MmpL3/TtfA trehalose monomycolate (TMM) transport complex under stress conditions. In Mycolicibacterium smegmatis (strain ATCC 700084 / mc(2)155) (Mycobacterium smegmatis), this protein is Seven-bladed beta-propeller protein MSMEG_5308.